Here is a 285-residue protein sequence, read N- to C-terminus: Urease accessory protein UreD (285 aa).

The protein belongs to the UreD family. As to quaternary structure, ureD, UreF and UreG form a complex that acts as a GTP-hydrolysis-dependent molecular chaperone, activating the urease apoprotein by helping to assemble the nickel containing metallocenter of UreC. The UreE protein probably delivers the nickel.

It localises to the cytoplasm. In terms of biological role, required for maturation of urease via the functional incorporation of the urease nickel metallocenter. The sequence is that of Urease accessory protein UreD from Picosynechococcus sp. (strain ATCC 27264 / PCC 7002 / PR-6) (Agmenellum quadruplicatum).